The chain runs to 246 residues: Probable transcriptional regulatory protein WP1214 (246 aa).

The disordered stretch occupies residues 1 to 22 (MAGHSQFSNIKHRKGAQDAKRS).

The protein belongs to the TACO1 family.

The protein localises to the cytoplasm. The polypeptide is Probable transcriptional regulatory protein WP1214 (Wolbachia pipientis subsp. Culex pipiens (strain wPip)).